Here is a 134-residue protein sequence, read N- to C-terminus: Cytochrome b5 (134 aa).

Ala-2 is subject to N-acetylalanine. An N6-acetyllysine mark is found at Lys-7, Lys-10, and Lys-19. The Cytochrome b5 heme-binding domain maps to 9–85 (VKYYTLEEIQ…SKTYIIGELH (77 aa)). Residues His-44 and His-68 each contribute to the heme site. The helical transmembrane segment at 109–131 (WWTNWVIPAISALVVALMYRLYM) threads the bilayer.

Belongs to the cytochrome b5 family.

The protein resides in the endoplasmic reticulum membrane. It localises to the microsome membrane. In terms of biological role, cytochrome b5 is a membrane-bound hemoprotein functioning as an electron carrier for several membrane-bound oxygenases. It is also involved in several steps of the sterol biosynthesis pathway, particularly in the C-6 double bond introduction during the C-6 desaturation. This is Cytochrome b5 (Cyb5a) from Rattus norvegicus (Rat).